Here is a 385-residue protein sequence, read N- to C-terminus: tRNA-specific 2-thiouridylase MnmA (385 aa).

ATP is bound by residues 8–15 (AMSGGVDS) and Leu34. The Nucleophile role is filled by Cys102. Cys102 and Cys200 are disulfide-bonded. Gly126 contacts ATP. The tract at residues 150-152 (KDQ) is interaction with tRNA. The Cysteine persulfide intermediate role is filled by Cys200. The interaction with tRNA stretch occupies residues 307–308 (RY).

This sequence belongs to the MnmA/TRMU family.

The protein localises to the cytoplasm. The catalysed reaction is S-sulfanyl-L-cysteinyl-[protein] + uridine(34) in tRNA + AH2 + ATP = 2-thiouridine(34) in tRNA + L-cysteinyl-[protein] + A + AMP + diphosphate + H(+). In terms of biological role, catalyzes the 2-thiolation of uridine at the wobble position (U34) of tRNA, leading to the formation of s(2)U34. This Heliobacterium modesticaldum (strain ATCC 51547 / Ice1) protein is tRNA-specific 2-thiouridylase MnmA.